Here is a 113-residue protein sequence, read N- to C-terminus: U11-theraphotoxin-Hhn1a (113 aa).

Residues 1 to 21 (MNTVRVTFLLVFVLAVSLGQA) form the signal peptide. The propeptide occupies 22 to 74 (DKDENRMEMQEKTEQGRSYLDFAENLLLQKLEELEAKLLEEDSEESRNSRQKR). The segment at 61 to 83 (EEDSEESRNSRQKRCIGEGVPCD) is disordered. 3 disulfide bridges follow: cysteine 75-cysteine 90, cysteine 82-cysteine 95, and cysteine 89-cysteine 110.

This sequence belongs to the neurotoxin 14 (magi-1) family. 01 (HNTX-16) subfamily. Expressed by the venom gland.

Its subcellular location is the secreted. Functionally, probable ion channel inhibitor. In Cyriopagopus hainanus (Chinese bird spider), this protein is U11-theraphotoxin-Hhn1a.